The sequence spans 249 residues: Aspartate/glutamate leucyltransferase (249 aa).

The protein belongs to the R-transferase family. Bpt subfamily.

Its subcellular location is the cytoplasm. It carries out the reaction N-terminal L-glutamyl-[protein] + L-leucyl-tRNA(Leu) = N-terminal L-leucyl-L-glutamyl-[protein] + tRNA(Leu) + H(+). The catalysed reaction is N-terminal L-aspartyl-[protein] + L-leucyl-tRNA(Leu) = N-terminal L-leucyl-L-aspartyl-[protein] + tRNA(Leu) + H(+). In terms of biological role, functions in the N-end rule pathway of protein degradation where it conjugates Leu from its aminoacyl-tRNA to the N-termini of proteins containing an N-terminal aspartate or glutamate. The protein is Aspartate/glutamate leucyltransferase of Xanthobacter autotrophicus (strain ATCC BAA-1158 / Py2).